The following is a 244-amino-acid chain: Securin-like protein (244 aa).

The disordered stretch occupies residues 31-53; the sequence is ELEKTPSRGGLGLVVNSSKTPGG.

In terms of assembly, forms a complex (via C-terminus) with separase sep-1. Interaction with ify-1 stabilizes sep-1. Also maintains the complex in the cytoplasm during interphase and recruits it to chromosomes during the first meiotic division. Interacts with E3 ubiquitin-protein ligase etc-1. Post-translationally, ubiquitinated by etc-1 likely at the onset of anaphase, resulting in its degradation. As to expression, expressed in germ cells including oocytes.

It localises to the cytoplasm. It is found in the chromosome. The protein localises to the cytoskeleton. The protein resides in the spindle. Acts as a chaperone and as an inhibitor for separase sep-1. Plays an essential role in maintaining chromosome cohesion prior to meiotic and mitotic anaphase, in cytokinesis and in organizing the spindle and the centrosome. Ubiquitination-dependent degradation at the onset of anaphase is likely to activate sep-1 resulting in the proteolysis of the cohesin complex and the subsequent segregation of the chromosomes. Also required for cortical granule exocytosis. This Caenorhabditis elegans protein is Securin-like protein.